Reading from the N-terminus, the 215-residue chain is Cytochrome b6 (215 aa).

Residues 32 to 52 form a helical membrane-spanning segment; sequence IFYCFGGITFTCFLVQVATGF. Cys-35 contacts heme c. Heme b is bound by residues His-86 and His-100. 3 helical membrane-spanning segments follow: residues 90–110, 116–136, and 186–206; these read ASMM…TGGF, LTWV…VTGY, and LHTF…FLMI. Residues His-187 and His-202 each contribute to the heme b site.

Belongs to the cytochrome b family. PetB subfamily. The 4 large subunits of the cytochrome b6-f complex are cytochrome b6, subunit IV (17 kDa polypeptide, PetD), cytochrome f and the Rieske protein, while the 4 small subunits are PetG, PetL, PetM and PetN. The complex functions as a dimer. Requires heme b as cofactor. It depends on heme c as a cofactor.

It is found in the plastid. It localises to the chloroplast thylakoid membrane. Functionally, component of the cytochrome b6-f complex, which mediates electron transfer between photosystem II (PSII) and photosystem I (PSI), cyclic electron flow around PSI, and state transitions. This chain is Cytochrome b6, found in Auxenochlorella protothecoides (Green microalga).